A 440-amino-acid polypeptide reads, in one-letter code: D-serine dehydratase (440 aa).

K116 is subject to N6-(pyridoxal phosphate)lysine.

Belongs to the serine/threonine dehydratase family. DsdA subfamily. In terms of assembly, monomer. Pyridoxal 5'-phosphate is required as a cofactor.

The enzyme catalyses D-serine = pyruvate + NH4(+). The protein is D-serine dehydratase of Salmonella choleraesuis (strain SC-B67).